The sequence spans 1203 residues: Potassium/sodium hyperpolarization-activated cyclic nucleotide-gated channel 4 (1203 aa).

The interval 1 to 182 (MDKLPPSMRK…QPASASCEQP (182 aa)) is disordered. Residues 1–263 (MDKLPPSMRK…IIHPYSDFRF (263 aa)) are Cytoplasmic-facing. Positions 26–36 (MDEEEDAEEEG) are enriched in acidic residues. The span at 105 to 117 (SRGGGSGGTGSGS) shows a compositional bias: gly residues. Over residues 121 to 133 (HLHDSAEERRLIA) the composition is skewed to basic and acidic residues. Ser138 bears the Phosphoserine mark. The segment covering 163 to 174 (ASPPPPQQPPQP) has biased composition (pro residues). The interval 209 to 260 (GQAGFMQRQFGAMLQPGVNKFSLRMFGSQKAVEREQERVKSAGFWIIHPYSD) is involved in subunit assembly. Residues 264-286 (YWDLTMLLLMVGNLIIIPVGITF) traverse the membrane as a helical segment. Residues 287-293 (FKDENTT) are Extracellular-facing. A helical membrane pass occupies residues 294–314 (PWIVFNVVSDTFFLIDLVLNF). The Cytoplasmic portion of the chain corresponds to 315–336 (RTGIVVEDNTEIILDPQRIKMK). Residues 337–359 (YLKSWFMVDFISSIPVDYIFLIV) form a helical membrane-spanning segment. Residues 360–378 (ETRIDSEVYKTARALRIVR) are Extracellular-facing. Residues 379-399 (FTKILSLLRLLRLSRLIRYIH) traverse the membrane as a helical; Voltage-sensor segment. The Cytoplasmic segment spans residues 400–413 (QWEEIFHMTYDLAS). The helical transmembrane segment at 414–436 (AVVRIVNLIGMMLLLCHWDGCLQ) threads the bilayer. Topologically, residues 437–464 (FLVPMLQDFPDDCWVSINNMVNNSWGKQ) are extracellular. An N-linked (GlcNAc...) asparagine glycan is attached at Asn458. Positions 465 to 486 (YSYALFKAMSHMLCIGYGRQAP) form an intramembrane region, pore-forming. Topologically, residues 487–491 (VGMSD) are extracellular. A helical transmembrane segment spans residues 492 to 517 (VWLTMLSMIVGATCYAMFIGHATALI). At 518–1203 (QSLDSSRRQY…PVRSKLPSNL (686 aa)) the chain is on the cytoplasmic side. 4 residues coordinate 3',5'-cyclic GMP: Tyr559, Lys562, Phe564, and Glu566. 3',5'-cyclic AMP is bound by residues Gly659, Glu660, Cys662, Arg669, Thr670, Val673, and Arg710. Disordered regions lie at residues 836 to 856 (ALGSASPASSPSQVDTPSSSS), 870 to 897 (GLSPLLPSSSSSPPPGACGSPSAPTPSA), and 918 to 1203 (LSSS…PSNL). 2 stretches are compositionally biased toward low complexity: residues 918–941 (LSSSDSPLLTPLQPGARSPQAAQP) and 966–986 (RSPSSSPGQLGQPPGELSLGL). Over residues 995–1004 (ETPPRQPEPP) the composition is skewed to pro residues. Positions 1005 to 1028 (SLVAGASGGASPVGFTPRGGLSPP) are enriched in low complexity. A compositionally biased stretch (pro residues) spans 1029–1042 (GHSPGPPRTFPSAP). The segment covering 1045–1056 (ASGSHGSLLLPP) has biased composition (low complexity). Ser1105 and Ser1108 each carry phosphoserine. Residues 1122–1137 (AGGGSGGSGSSGGLGP) show a composition bias toward gly residues.

Belongs to the potassium channel HCN family. Homotetramer. The channel assemble into homotetramers or heteromeric complexes that contains of four pore-forming subunits. Interacts with PEX5L with a 4:4 HCN4:PEX5L stoichiometry; reduces the effects of cAMP on the voltage-dependence and rate of activation. Interacts with IRAG1; regulates HCN4 channel activity. Interacts with IRAG2; regulates HCN4 channel activity. In terms of processing, S-palmitoylated. In terms of tissue distribution, highly expressed in thalamus, testis and in heart, both in ventricle and atrium. Detected at much lower levels in amygdala, substantia nigra, cerebellum and hippocampus.

It localises to the cell membrane. It carries out the reaction K(+)(in) = K(+)(out). The enzyme catalyses Na(+)(in) = Na(+)(out). With respect to regulation, activated by cAMP and to a lesser extent by cGMP and cCMP. cAMP binding causes a conformation change that leads to the assembly of an active tetramer and channel opening. Binding of cAMP removes a tonic inhibition conferred by cyclic nucleotide-binding domain (CNBD) on channel opening. Cyclic dinucleotides can modulate HCN4 channel; cyclic dinucleotides acting as potent antagonists of cAMP. Inhibited by extracellular Cs(+) ions. Auxiliary subunits can also regulate HCN4 channel. IRAG1 causes a gain-of-function by shifting HCN4 activation to more depolarized membrane potentials in the absence of cAMP. In contrast, IRAG2 causes a loss-of-function by inhibiting cAMP-dependent potentiation of HCN4 activation. In terms of biological role, hyperpolarization-activated ion channel that are permeable to Na(+) and K(+) ions with very slow activation and inactivation. Exhibits higher selectivity for K(+) over Na(+) ions. Contributes to the native pacemaker currents in heart (If) that regulate the rhythm of heart beat. Contributes to the native pacemaker currents in neurons (Ih). May mediate responses to sour stimuli. The chain is Potassium/sodium hyperpolarization-activated cyclic nucleotide-gated channel 4 from Homo sapiens (Human).